Reading from the N-terminus, the 937-residue chain is DNA mismatch repair protein msh-2 (937 aa).

659–666 is an ATP binding site; that stretch reads GPNMGGKS.

It belongs to the DNA mismatch repair MutS family. As to quaternary structure, heterodimer of msh2 and msh6.

Its subcellular location is the nucleus. Functionally, involved in post-replicative DNA-mismatch repair. Binds to mismatch-containing DNA. The protein is DNA mismatch repair protein msh-2 (msh-2) of Neurospora crassa (strain ATCC 24698 / 74-OR23-1A / CBS 708.71 / DSM 1257 / FGSC 987).